A 343-amino-acid polypeptide reads, in one-letter code: LRP2-binding protein (343 aa).

One copy of the TPR repeat lies at 58-91; it reads SQATFLLGQLHYVQGCYAEAELIFDRIKDKDPQA. 6 Sel1-like repeats span residues 92-124, 132-167, 172-205, 206-241, 242-273, and 293-328; these read LYQLAVIYYDGLGTKEDLGRAVEYMGRVAFWDS, YAALYNLGQAYLEGFGVQASSSEAERLWLLAADNGN, VKAQSALGMFYSRPESLDLRKAFFWHSQACGNGS, LESQAALGLMYLYGHGVQRDSDSALFCLKEAAERGS, VYAQGHLTACYYRRQLYSRAAALGQRVCEYKD, and AIGMFYYARCLHLGRGVPQNRDKAKHYCTQAVRIDP.

It localises to the cytoplasm. Functionally, may act as an adapter that regulates LRP2 function. This Danio rerio (Zebrafish) protein is LRP2-binding protein (lrp2bp).